A 394-amino-acid chain; its full sequence is MEYKPIRKVVSGNYAAAYAALHARVQVVAAYPITPQTSIIEKIAEFIANGEADIQYIPVESEHSAMAACIGASATGARTFTATSAQGLALMHEMLHWAAGARLPIVMVDVNRAMAPPWSVWDDQTDSLSQRDTGWMQFYAENNQEVYDGVLMAYKVAETVNVPAMVVESAFILSHTYDVVEMIPQELVDEFLPPRKPLYSLANFDEPIAVGALATPNDYYEFRYKLAKAHEEAKKVIKEVGKEFGERFGRDYSQMIETGYIDDADFVFMGMGSLMGTVKEAVDLLRKEGYKVGYAKVRWFRPFPKEELVEIAESVKGIAVLDRNFSFGQEGILFTESKGALYNSSAHPLMKNYIVGLGGRDVTVKDIKAIADDMKKVIESGKVDKEVVWYHLKR.

Heterotetramer of one alpha, one beta, one delta and one gamma chain.

The enzyme catalyses 3-methyl-2-oxobutanoate + 2 oxidized [2Fe-2S]-[ferredoxin] + CoA = 2-methylpropanoyl-CoA + 2 reduced [2Fe-2S]-[ferredoxin] + CO2 + H(+). This is Ketoisovalerate oxidoreductase subunit VorA (vorA) from Pyrococcus furiosus (strain ATCC 43587 / DSM 3638 / JCM 8422 / Vc1).